A 294-amino-acid polypeptide reads, in one-letter code: UDP-3-O-acyl-N-acetylglucosamine deacetylase (294 aa).

Positions 75, 232, and 236 each coordinate Zn(2+). Residue histidine 259 is the Proton donor of the active site.

This sequence belongs to the LpxC family. Zn(2+) serves as cofactor.

The catalysed reaction is a UDP-3-O-[(3R)-3-hydroxyacyl]-N-acetyl-alpha-D-glucosamine + H2O = a UDP-3-O-[(3R)-3-hydroxyacyl]-alpha-D-glucosamine + acetate. It functions in the pathway glycolipid biosynthesis; lipid IV(A) biosynthesis; lipid IV(A) from (3R)-3-hydroxytetradecanoyl-[acyl-carrier-protein] and UDP-N-acetyl-alpha-D-glucosamine: step 2/6. Its function is as follows. Catalyzes the hydrolysis of UDP-3-O-myristoyl-N-acetylglucosamine to form UDP-3-O-myristoylglucosamine and acetate, the committed step in lipid A biosynthesis. This is UDP-3-O-acyl-N-acetylglucosamine deacetylase from Campylobacter jejuni subsp. jejuni serotype O:6 (strain 81116 / NCTC 11828).